The sequence spans 132 residues: Agouti-signaling protein (132 aa).

The first 22 residues, 1-22 (MDVTRLLLATLLVFLCFFTAYS), serve as a signal peptide directing secretion. Asn-39 carries N-linked (GlcNAc...) asparagine glycosylation. Residues 61–87 (QISRKEAEKKRSSKKEASMKKVARPRT) form a disordered region. The span at 63-79 (SRKEAEKKRSSKKEASM) shows a compositional bias: basic and acidic residues. 5 disulfide bridges follow: Cys-93–Cys-108, Cys-100–Cys-114, Cys-107–Cys-125, Cys-111–Cys-132, and Cys-116–Cys-123. Residues 93–132 (CVATRDSCKPPAPACCDPCAFCQCRFFRSACSCRVLSLNC) form the Agouti domain.

It is found in the secreted. In terms of biological role, involved in the regulation of melanogenesis. The binding of ASP to MC1R precludes alpha-MSH initiated signaling and thus blocks production of cAMP, leading to a down-regulation of eumelanogenesis (brown/black pigment) and thus increasing synthesis of pheomelanin (yellow/red pigment). In Macaca hecki (Heck's macaque), this protein is Agouti-signaling protein (ASIP).